The primary structure comprises 592 residues: Protein kinase C zeta type (592 aa).

In terms of domain architecture, PB1 spans 15 to 98 (RVRLKAHYGG…EVLIIHVFPS (84 aa)). The interval 79 to 145 (AFRLACQGRD…KRFNRRAYCG (67 aa)) is interaction with SQSTM1. The Phorbol-ester/DAG-type zinc finger occupies 130–180 (GHLFQAKRFNRRAYCGQCSERIWGLARQGYRCINCKLLVHKRCHVLVPLTC). Residues 252-518 (FDLIRVIGRG…FSDIKSHAFF (267 aa)) enclose the Protein kinase domain. Residues 258 to 266 (IGRGSYAKV) and lysine 281 each bind ATP. Residue aspartate 376 is the Proton acceptor of the active site. Threonine 410 is modified (phosphothreonine; by PDPK1 and PI3K). Residues 519 to 590 (RSIDWDLLEK…INPLLLSAEE (72 aa)) form the AGC-kinase C-terminal domain. Threonine 560 carries the post-translational modification Phosphothreonine. At serine 591 the chain carries Phosphoserine.

This sequence belongs to the protein kinase superfamily. AGC Ser/Thr protein kinase family. PKC subfamily. Interacts with PARD6A, PARD6B and PARD6G. Part of a complex with PARD3, PARD6A or PARD6B or PARD6G and CDC42 or RAC1. Interacts with ADAP1/CENTA1. Forms a ternary complex with SQSTM1 and KCNAB2. Forms another ternary complex with SQSTM1 and GABRR3. Forms a complex with SQSTM1 and MAP2K5. Interacts (via the protein kinase domain) with WWC1. Forms a tripartite complex with WWC1 and DDR1, but predominantly in the absence of collagen. Component of the Par polarity complex, composed of at least phosphorylated PRKCZ, PARD3 and TIAM1. Interacts with PDPK1 (via N-terminal region). Interacts with WDFY2 (via WD repeats 1-3). Interacts with VAMP2. Forms a complex with WDFY2 and VAMP2. Interacts with APPL1. Interacts with WWC1, WWC2 and WWC3. Post-translationally, CDH5 is required for its phosphorylation at Thr-410. Phosphorylated by protein kinase PDPK1; phosphorylation is inhibited by the apoptotic C-terminal cleavage product of PKN2. Phosphorylation at Thr-410 by PI3K activates the kinase. In terms of tissue distribution, isoform 1: In brain, expressed in hippocampus, neocortex and cerebellum (at protein level). Also expressed in lung, liver, kidney, testis and to a lesser extent in pancreas, intestine and skin (at protein level). Isoform 2: Specifically expressed in brain where it localizes to the hippocampus, neocortex and cerebellum (at protein level).

The protein resides in the cytoplasm. It localises to the endosome. It is found in the cell junction. The protein localises to the membrane. It catalyses the reaction L-seryl-[protein] + ATP = O-phospho-L-seryl-[protein] + ADP + H(+). The enzyme catalyses L-threonyl-[protein] + ATP = O-phospho-L-threonyl-[protein] + ADP + H(+). Atypical PKCs (PRKCI and PRKCZ) exhibit an elevated basal enzymatic activity (that may be due to the interaction with SMG1 or SQSTM1) and are not regulated by diacylglycerol, phosphatidylserine, phorbol esters or calcium ions. Two specific sites, Thr-410 (activation loop of the kinase domain) and Thr-560 (turn motif), need to be phosphorylated for its full activation. Phosphatidylinositol 3,4,5-trisphosphate might be a physiological activator. Isoform 2: Constitutively active. Functionally, calcium- and diacylglycerol-independent serine/threonine-protein kinase that functions in phosphatidylinositol 3-kinase (PI3K) pathway and mitogen-activated protein (MAP) kinase cascade, and is involved in NF-kappa-B activation, mitogenic signaling, cell proliferation, cell polarity, inflammatory response and maintenance of long-term potentiation (LTP). Upon lipopolysaccharide (LPS) treatment in macrophages, or following mitogenic stimuli, functions downstream of PI3K to activate MAP2K1/MEK1-MAPK1/ERK2 signaling cascade independently of RAF1 activation. Required for insulin-dependent activation of AKT3, but may function as an adapter rather than a direct activator. Upon insulin treatment may act as a downstream effector of PI3K and contribute to the activation of translocation of the glucose transporter SLC2A4/GLUT4 and subsequent glucose transport in adipocytes. In EGF-induced cells, binds and activates MAP2K5/MEK5-MAPK7/ERK5 independently of its kinase activity and can activate JUN promoter through MEF2C. Through binding with SQSTM1/p62, functions in interleukin-1 signaling and activation of NF-kappa-B with the specific adapters RIPK1 and TRAF6. Participates in TNF-dependent transactivation of NF-kappa-B by phosphorylating and activating IKBKB kinase, which in turn leads to the degradation of NF-kappa-B inhibitors. In migrating astrocytes, forms a cytoplasmic complex with PARD6A and is recruited by CDC42 to function in the establishment of cell polarity along with the microtubule motor and dynein. In association with FEZ1, stimulates neuronal differentiation in PC12 cells. In the inflammatory response, is required for the T-helper 2 (Th2) differentiation process, including interleukin production, efficient activation of JAK1 and the subsequent phosphorylation and nuclear translocation of STAT6. May be involved in development of allergic airway inflammation (asthma), a process dependent on Th2 immune response. In the NF-kappa-B-mediated inflammatory response, can relieve SETD6-dependent repression of NF-kappa-B target genes by phosphorylating the RELA subunit at 'Ser-311'. Phosphorylates VAMP2 in vitro. Phosphorylates and activates LRRK1, which phosphorylates RAB proteins involved in intracellular trafficking. Its function is as follows. Involved in late synaptic long term potentiation phase in CA1 hippocampal cells and long term memory maintenance. The chain is Protein kinase C zeta type (Prkcz) from Rattus norvegicus (Rat).